A 424-amino-acid polypeptide reads, in one-letter code: Serine--tRNA ligase (424 aa).

230-232 (TAE) is a binding site for L-serine. Position 261–263 (261–263 (RSE)) interacts with ATP. E284 serves as a coordination point for L-serine. ATP is bound at residue 348–351 (EISS). S384 is a binding site for L-serine.

Belongs to the class-II aminoacyl-tRNA synthetase family. Type-1 seryl-tRNA synthetase subfamily. Homodimer. The tRNA molecule binds across the dimer.

The protein resides in the cytoplasm. It catalyses the reaction tRNA(Ser) + L-serine + ATP = L-seryl-tRNA(Ser) + AMP + diphosphate + H(+). The catalysed reaction is tRNA(Sec) + L-serine + ATP = L-seryl-tRNA(Sec) + AMP + diphosphate + H(+). It functions in the pathway aminoacyl-tRNA biosynthesis; selenocysteinyl-tRNA(Sec) biosynthesis; L-seryl-tRNA(Sec) from L-serine and tRNA(Sec): step 1/1. In terms of biological role, catalyzes the attachment of serine to tRNA(Ser). Is also able to aminoacylate tRNA(Sec) with serine, to form the misacylated tRNA L-seryl-tRNA(Sec), which will be further converted into selenocysteinyl-tRNA(Sec). This Streptococcus pneumoniae (strain Hungary19A-6) protein is Serine--tRNA ligase.